Here is a 282-residue protein sequence, read N- to C-terminus: Probable endonuclease 4 (282 aa).

Zn(2+) is bound by residues His-67, His-107, Glu-144, Asp-178, His-181, His-215, Asp-228, His-230, and Glu-260.

This sequence belongs to the AP endonuclease 2 family. Zn(2+) is required as a cofactor.

It carries out the reaction Endonucleolytic cleavage to 5'-phosphooligonucleotide end-products.. In terms of biological role, endonuclease IV plays a role in DNA repair. It cleaves phosphodiester bonds at apurinic or apyrimidinic (AP) sites, generating a 3'-hydroxyl group and a 5'-terminal sugar phosphate. The sequence is that of Probable endonuclease 4 from Methanoculleus marisnigri (strain ATCC 35101 / DSM 1498 / JR1).